We begin with the raw amino-acid sequence, 117 residues long: Large ribosomal subunit protein bL19 (117 aa).

It belongs to the bacterial ribosomal protein bL19 family.

This protein is located at the 30S-50S ribosomal subunit interface and may play a role in the structure and function of the aminoacyl-tRNA binding site. The chain is Large ribosomal subunit protein bL19 from Vibrio vulnificus (strain CMCP6).